A 419-amino-acid chain; its full sequence is UDP-N-acetylglucosamine 1-carboxyvinyltransferase 2 (419 aa).

Residue 24–25 (KN) coordinates phosphoenolpyruvate. Residue R94 coordinates UDP-N-acetyl-alpha-D-glucosamine. C118 functions as the Proton donor in the catalytic mechanism. Residue C118 is modified to 2-(S-cysteinyl)pyruvic acid O-phosphothioketal. Residues 123-127 (RPIDQ), D307, and I329 contribute to the UDP-N-acetyl-alpha-D-glucosamine site.

This sequence belongs to the EPSP synthase family. MurA subfamily.

Its subcellular location is the cytoplasm. It catalyses the reaction phosphoenolpyruvate + UDP-N-acetyl-alpha-D-glucosamine = UDP-N-acetyl-3-O-(1-carboxyvinyl)-alpha-D-glucosamine + phosphate. Its pathway is cell wall biogenesis; peptidoglycan biosynthesis. In terms of biological role, cell wall formation. Adds enolpyruvyl to UDP-N-acetylglucosamine. The protein is UDP-N-acetylglucosamine 1-carboxyvinyltransferase 2 of Staphylococcus aureus (strain bovine RF122 / ET3-1).